We begin with the raw amino-acid sequence, 262 residues long: Zinc finger protein 138 (262 aa).

The C2H2-type 1 zinc finger occupies 110-132; the sequence is FRCKECDKSLCMLSRLTQHKKIH. The C2H2-type 2; degenerate zinc finger occupies 138-160; that stretch reads YKCEECGKTFNWSTNLSKPKKIH. The segment at 166–188 adopts a C2H2-type 3; degenerate zinc-finger fold; the sequence is YKCEVCGKAFHQSSILTKHKIIR. Residues 194–216 form a C2H2-type 4 zinc finger; sequence YKCAHCGKAFKQSSHLTRHKIIH. Residues 222 to 244 form a C2H2-type 5; degenerate zinc finger; it reads YKCEQCGKVFKQSPTLTKHQIIY. The C2H2-type 6; degenerate zinc finger occupies 250-262; the sequence is YKCEECGKAFNLS.

The protein belongs to the krueppel C2H2-type zinc-finger protein family.

Its subcellular location is the nucleus. In terms of biological role, may be involved in transcriptional regulation as a repressor. The sequence is that of Zinc finger protein 138 (ZNF138) from Homo sapiens (Human).